Here is a 41-residue protein sequence, read N- to C-terminus: Large ribosomal subunit protein bL36 (41 aa).

The protein belongs to the bacterial ribosomal protein bL36 family.

The protein is Large ribosomal subunit protein bL36 of Bartonella henselae (strain ATCC 49882 / DSM 28221 / CCUG 30454 / Houston 1) (Rochalimaea henselae).